The following is a 554-amino-acid chain: Wee1-like protein kinase 2-C (554 aa).

2 disordered regions span residues 1–86 (MRTA…GGEC) and 145–183 (TLVN…SQMK). Composition is skewed to polar residues over residues 38–48 (SPVSSWRTNNC) and 147–163 (VNVN…THFQ). The Protein kinase domain occupies 213 to 487 (FLEIEKIGAG…AKNSVLRRCV (275 aa)). ATP is bound by residues 219-227 (IGAGEFGSV) and K242. D340 (proton acceptor) is an active-site residue. 2 residues coordinate Mg(2+): N345 and D377. Positions 490–516 (AAELQKQLNVEKFKTAMLERELQAAKL) form a coiled coil.

It belongs to the protein kinase superfamily. Ser/Thr protein kinase family. WEE1 subfamily.

It localises to the nucleus. It carries out the reaction L-tyrosyl-[protein] + ATP = O-phospho-L-tyrosyl-[protein] + ADP + H(+). In terms of biological role, protein tyrosine kinase that phosphorylates and inhibits cdk1 and acts as a regulator of meiosis in oocytes. Required to ensure the meiotic cell cycle in oocytes by phosphorylating cdk1 at 'Tyr-15', leading to inhibit cdk1 activity and prevent meiosis. This chain is Wee1-like protein kinase 2-C (wee2-c), found in Xenopus laevis (African clawed frog).